The chain runs to 60 residues: Large ribosomal subunit protein uL30 (60 aa).

The protein belongs to the universal ribosomal protein uL30 family. As to quaternary structure, part of the 50S ribosomal subunit.

This Sphingopyxis alaskensis (strain DSM 13593 / LMG 18877 / RB2256) (Sphingomonas alaskensis) protein is Large ribosomal subunit protein uL30.